We begin with the raw amino-acid sequence, 200 residues long: Lipopolysaccharide core heptose(II)-phosphate phosphatase (200 aa).

The first 25 residues, Met-1–Ala-25, serve as a signal peptide directing secretion.

The protein belongs to the phosphoglycerate mutase family. Ais subfamily.

It is found in the periplasm. It participates in bacterial outer membrane biogenesis; lipopolysaccharide metabolism. Its function is as follows. Catalyzes the dephosphorylation of heptose(II) of the outer membrane lipopolysaccharide core. This Escherichia coli O7:K1 (strain IAI39 / ExPEC) protein is Lipopolysaccharide core heptose(II)-phosphate phosphatase.